We begin with the raw amino-acid sequence, 359 residues long: Lachesin (359 aa).

An N-terminal signal peptide occupies residues Met-1 to Ala-25. Positions Pro-29–Ser-130 constitute an Ig-like V-type domain. Cys-50 and Cys-113 are joined by a disulfide. N-linked (GlcNAc...) asparagine glycosylation is found at Asn-92 and Asn-140. Ig-like C2-type domains follow at residues Pro-135–Glu-221 and Pro-226–Asn-317. Disulfide bonds link Cys-157–Cys-204 and Cys-247–Cys-303. A lipid anchor (GPI-anchor amidated alanine) is attached at Ala-336. A propeptide spans Gly-337 to Arg-359 (removed in mature form).

Expressed on differentiating neuronal cells from the onset of neurogenesis in both the central and peripheral nervous systems. First detected in the cellularized blastoderm, apart from in the ventral side. Expression persists uniformly in the early ectoderm until the end of gastrulation. From stage 10, expressed in an alternating strong/weak pattern in each segment until stage 15 when it disappears. From stage 11, expressed in subsets of neurons and later subsets of glial cells. From early stage 13, strongly expressed in trachea, hindgut, foregut and the nervous system.

It is found in the cell membrane. Required for normal tracheal development and maintenance of the trans-epithelial diffusion barrier. Functions as a homophilic cell-adhesion molecule. May play a role in early neuronal differentiation and axon outgrowth. This Drosophila melanogaster (Fruit fly) protein is Lachesin (Lac).